We begin with the raw amino-acid sequence, 98 residues long: NADH-ubiquinone oxidoreductase chain 4L (98 aa).

3 consecutive transmembrane segments (helical) span residues 2 to 22 (PSIF…TLVF), 29 to 49 (SLLC…LIIL), and 61 to 81 (ILLL…LVMV).

It belongs to the complex I subunit 4L family. As to quaternary structure, core subunit of respiratory chain NADH dehydrogenase (Complex I) which is composed of 45 different subunits.

It is found in the mitochondrion inner membrane. It carries out the reaction a ubiquinone + NADH + 5 H(+)(in) = a ubiquinol + NAD(+) + 4 H(+)(out). In terms of biological role, core subunit of the mitochondrial membrane respiratory chain NADH dehydrogenase (Complex I) which catalyzes electron transfer from NADH through the respiratory chain, using ubiquinone as an electron acceptor. Part of the enzyme membrane arm which is embedded in the lipid bilayer and involved in proton translocation. The protein is NADH-ubiquinone oxidoreductase chain 4L (MT-ND4L) of Propithecus diadema diadema (Diademed sifaka).